Reading from the N-terminus, the 90-residue chain is MPRSLKKGPFIDHHLLQKVDAAVANNERRPIKTWSRRSMIMPQMVGLTIAVHNGRQHVPVLVNENMVGHKLGEFAATRTFKGHVANKKAR.

This sequence belongs to the universal ribosomal protein uS19 family.

Functionally, protein S19 forms a complex with S13 that binds strongly to the 16S ribosomal RNA. This is Small ribosomal subunit protein uS19 from Thioalkalivibrio sulfidiphilus (strain HL-EbGR7).